The following is a 434-amino-acid chain: MTKTDIATRVHNHTWKLDPIVRSLIDTDFYKLLMLQMIWKLYPEVDATFSLINRTKTVRLAEEIDEMELREQLDHARTLRLSKKENIWLAGNTFYGRSQIFEPEFLSWLSSYQLPEYELFKRDGQYELNFHGRWMDTTLWEIPALSIINELRSRSAMRSLGYFTLDVLYARAKAKMWEKVERLRELPGLRISDFGTRRRHSFLWQRWCVEALKEGIGPAFTGTSNVLLAMDSDLEAVGTNAHELPMVVAALAQTNEELAAAPYQVLKDWNRLYGGNLLIVLPDAFGTAAFLRNAPEWVADWTGFRPDSAPPIEGGEKIIEWWRKMGRDPRTKMLIFSDGLDVDAIVDTYRHFEGRVRMSFGWGTNLTNDFAGCAPKTIASLKPISIVCKVSDANGRPAVKLSDNPQKATGDPAEVERYLKFFGEEDHKEQKVLV.

At His242 the chain carries Phosphohistidine; by autocatalysis.

It belongs to the NAPRTase family. In terms of processing, transiently phosphorylated on a His residue during the reaction cycle. Phosphorylation strongly increases the affinity for substrates and increases the rate of nicotinate D-ribonucleotide production. Dephosphorylation regenerates the low-affinity form of the enzyme, leading to product release.

The enzyme catalyses nicotinate + 5-phospho-alpha-D-ribose 1-diphosphate + ATP + H2O = nicotinate beta-D-ribonucleotide + ADP + phosphate + diphosphate. The protein operates within cofactor biosynthesis; NAD(+) biosynthesis; nicotinate D-ribonucleotide from nicotinate: step 1/1. Its function is as follows. Catalyzes the synthesis of beta-nicotinate D-ribonucleotide from nicotinate and 5-phospho-D-ribose 1-phosphate at the expense of ATP. This is Nicotinate phosphoribosyltransferase from Agrobacterium fabrum (strain C58 / ATCC 33970) (Agrobacterium tumefaciens (strain C58)).